We begin with the raw amino-acid sequence, 104 residues long: DNA-directed RNA polymerase subunit Rpo13 (104 aa).

Disordered stretches follow at residues 1–33 (MVSG…EDEF) and 78–104 (RDSR…SVEG). Residues 7–31 (TDEEKEGTSDEEVNEEKEVEETSED) are compositionally biased toward acidic residues. The segment covering 80-104 (SRRKAKKAVSKKVKKTKKKEKSVEG) has biased composition (basic residues).

It belongs to the archaeal Rpo13 RNA polymerase subunit family. In terms of assembly, part of the 13-subunit RNA polymerase complex.

The protein resides in the cytoplasm. The enzyme catalyses RNA(n) + a ribonucleoside 5'-triphosphate = RNA(n+1) + diphosphate. In terms of biological role, DNA-dependent RNA polymerase (RNAP) catalyzes the transcription of DNA into RNA using the four ribonucleoside triphosphates as substrates. Probably binds dsDNA. The sequence is that of DNA-directed RNA polymerase subunit Rpo13 from Saccharolobus solfataricus (strain ATCC 35092 / DSM 1617 / JCM 11322 / P2) (Sulfolobus solfataricus).